Here is a 956-residue protein sequence, read N- to C-terminus: METQELRGALALLLLCFFTSASQDLQVIDLLTVGESRQMVAVAEKIRTALLTAGDIYLLSTFRLPPKQGGVLFGLYSRQDNTRWLEASVVGKINKVLVRYQREDGKVHAVNLQQAGLADGRTHTVLLRLRGPSRPSPALHLYVDCKLGDQHAGLPALAPIPPAEVDGLEIRTGQKAYLRMQGFVESMKIILGGSMARVGALSECPFQGDESIHSAVTNALHSILGEQTKALVTQLTLFNQILVELRDDIRDQVKEMSLIRNTIMECQVCGFHEQRSHCSPNPCFRGVDCMEVYEYPGYRCGPCPPGLQGNGTHCSDINECAHADPCFPGSSCINTMPGFHCEACPRGYKGTQVSGVGIDYARASKQVCNDIDECNDGNNGGCDPNSICTNTVGSFKCGPCRLGFLGNQSQGCLPARTCHSPAHSPCHIHAHCLFERNGAVSCQCNVGWAGNGNVCGTDTDIDGYPDQALPCMDNNKHCKQDNCLLTPNSGQEDADNDGVGDQCDDDADGDGIKNVEDNCRLFPNKDQQNSDTDSFGDACDNCPNVPNNDQKDTDGNGEGDACDNDVDGDGIPNGLDNCPKVPNPLQTDRDEDGVGDACDSCPEMSNPTQTDADSDLVGDVCDTNEDSDGDGHQDTKDNCPQLPNSSQLDSDNDGLGDECDGDDDNDGIPDYVPPGPDNCRLVPNPNQKDSDGNGVGDVCEDDFDNDAVVDPLDVCPESAEVTLTDFRAYQTVVLDPEGDAQIDPNWVVLNQGMEIVQTMNSDPGLAVGYTAFNGVDFEGTFHVNTVTDDDYAGFLFSYQDSGRFYVVMWKQTEQTYWQATPFRAVAQPGLQLKAVTSVSGPGEHLRNALWHTGHTPDQVRLLWTDPRNVGWRDKTSYRWQLLHRPQVGYIRVKLYEGPQLVADSGVIIDTSMRGGRLGVFCFSQENIIWSNLQYRCNDTVPEDFEPFRRQLLQGRV.

The signal sequence occupies residues 1-22; that stretch reads METQELRGALALLLLCFFTSAS. Residues 23 to 193 form the Laminin G-like domain; it reads QDLQVIDLLT…VESMKIILGG (171 aa). Cystine bridges form between Cys278–Cys289, Cys283–Cys300, Cys303–Cys314, Cys320–Cys332, Cys326–Cys341, Cys344–Cys368, Cys374–Cys388, Cys382–Cys397, Cys400–Cys412, Cys418–Cys432, Cys426–Cys442, Cys444–Cys455, Cys471–Cys478, Cys483–Cys503, Cys519–Cys539, Cys542–Cys562, Cys578–Cys598, Cys601–Cys621, Cys639–Cys659, Cys679–Cys699, and Cys715–Cys936. Asn310 carries N-linked (GlcNAc...) asparagine glycosylation. The 39-residue stretch at 316–354 folds into the EGF-like 1; calcium-binding domain; sequence DINECAHADPCFPGSSCINTMPGFHCEACPRGYKGTQVS. The region spanning 370–410 is the EGF-like 2; calcium-binding domain; that stretch reads DIDECNDGNNGGCDPNSICTNTVGSFKCGPCRLGFLGNQSQ. A glycan (N-linked (GlcNAc...) asparagine) is linked at Asn407. Positions 414–456 constitute an EGF-like 3 domain; the sequence is PARTCHSPAHSPCHIHAHCLFERNGAVSCQCNVGWAGNGNVCG. 8 TSP type-3 repeats span residues 457–491, 492–527, 528–550, 551–586, 587–609, 610–647, 648–687, and 688–723; these read TDTD…NSGQ, EDAD…NKDQ, QNSD…NNDQ, KDTD…NPLQ, TDRD…NPTQ, TDAD…NSSQ, LDSD…NPNQ, and KDSD…EVTL. 2 disordered regions span residues 518 to 537 and 546 to 702; these read NCRL…SFGD and PNND…CEDD. Residues 555 to 568 are compositionally biased toward acidic residues; it reads GNGEGDACDNDVDG. Acidic residues predominate over residues 612–628; sequence ADSDLVGDVCDTNEDSD. N-linked (GlcNAc...) asparagine glycosylation occurs at Asn644. Acidic residues predominate over residues 650–667; the sequence is SDNDGLGDECDGDDDNDG. In terms of domain architecture, TSP C-terminal spans 727–941; the sequence is RAYQTVVLDP…LQYRCNDTVP (215 aa). Residue Asn937 is glycosylated (N-linked (GlcNAc...) asparagine).

It belongs to the thrombospondin family. Oligomer; disulfide-linked.

Its function is as follows. Adhesive glycoprotein that mediates cell-to-cell and cell-to-matrix interactions. Can bind to fibrinogen, fibronectin, laminin and type V collagen. The chain is Thrombospondin-3 (THBS3) from Homo sapiens (Human).